Consider the following 169-residue polypeptide: uncharacterized protein (169 aa).

One can recognise an N-acetyltransferase domain in the interval 4–160 (IEVKRLLVNY…EGVKEQLSED (157 aa)).

This is an uncharacterized protein from Halalkalibacterium halodurans (strain ATCC BAA-125 / DSM 18197 / FERM 7344 / JCM 9153 / C-125) (Bacillus halodurans).